Here is a 190-residue protein sequence, read N- to C-terminus: 6,7-dimethyl-8-ribityllumazine synthase (190 aa).

5-amino-6-(D-ribitylamino)uracil contacts are provided by residues Phe-23, 61–63, and 85–87; these read SFE and AVI. 90 to 91 is a (2S)-2-hydroxy-3-oxobutyl phosphate binding site; it reads QT. His-93 acts as the Proton donor in catalysis. Phe-118 is a binding site for 5-amino-6-(D-ribitylamino)uracil. Arg-132 contacts (2S)-2-hydroxy-3-oxobutyl phosphate.

The protein belongs to the DMRL synthase family.

The catalysed reaction is (2S)-2-hydroxy-3-oxobutyl phosphate + 5-amino-6-(D-ribitylamino)uracil = 6,7-dimethyl-8-(1-D-ribityl)lumazine + phosphate + 2 H2O + H(+). The protein operates within cofactor biosynthesis; riboflavin biosynthesis; riboflavin from 2-hydroxy-3-oxobutyl phosphate and 5-amino-6-(D-ribitylamino)uracil: step 1/2. Functionally, catalyzes the formation of 6,7-dimethyl-8-ribityllumazine by condensation of 5-amino-6-(D-ribitylamino)uracil with 3,4-dihydroxy-2-butanone 4-phosphate. This is the penultimate step in the biosynthesis of riboflavin. This Nostoc sp. (strain PCC 7120 / SAG 25.82 / UTEX 2576) protein is 6,7-dimethyl-8-ribityllumazine synthase.